The chain runs to 101 residues: Protein Tat (101 aa).

The interval 1-24 (MEPVDPRLEPWKHPGSQPKTACTN) is interaction with human CREBBP. The segment at 1–48 (MEPVDPRLEPWKHPGSQPKTACTNCYCKKCCFHCQVCFTKKALGISYG) is transactivation. Cysteine 22, cysteine 25, and cysteine 27 together coordinate Zn(2+). Residues 22–37 (CTNCYCKKCCFHCQVC) form a cysteine-rich region. Lysine 28 carries the post-translational modification N6-acetyllysine; by host PCAF. Zn(2+) is bound by residues cysteine 30, histidine 33, cysteine 34, and cysteine 37. The tract at residues 38–48 (FTKKALGISYG) is core. Residues 47-101 (YGRKKRRQRRRAHQDSQNHQASLSKQPSSQTRGDPTGPKEPKKEVEREAETDPLD) form a disordered region. Basic residues predominate over residues 48 to 58 (GRKKRRQRRRA). The Nuclear localization signal, RNA-binding (TAR), and protein transduction motif lies at 49–57 (RKKRRQRRR). The interval 49 to 86 (RKKRRQRRRAHQDSQNHQASLSKQPSSQTRGDPTGPKE) is interaction with the host capping enzyme RNGTT. 2 positions are modified to N6-acetyllysine; by host EP300 and GCN5L2: lysine 50 and lysine 51. 2 positions are modified to asymmetric dimethylarginine; by host PRMT6: arginine 52 and arginine 53. The segment covering 61–79 (DSQNHQASLSKQPSSQTRG) has biased composition (polar residues). A Glycyl lysine isopeptide (Lys-Gly) (interchain with G-Cter in ubiquitin) cross-link involves residue lysine 71. Residues 78 to 80 (RGD) carry the Cell attachment site motif. Positions 83–101 (GPKEPKKEVEREAETDPLD) are enriched in basic and acidic residues.

This sequence belongs to the lentiviruses Tat family. Interacts with host CCNT1. Associates with the P-TEFb complex composed at least of Tat, P-TEFb (CDK9 and CCNT1), TAR RNA, RNA Pol II. Recruits the HATs CREBBP, TAF1/TFIID, EP300, PCAF and GCN5L2. Interacts with host KAT5/Tip60; this interaction targets the latter to degradation. Interacts with the host deacetylase SIRT1. Interacts with host capping enzyme RNGTT; this interaction stimulates RNGTT. Binds to host KDR, and to the host integrins ITGAV/ITGB3 and ITGA5/ITGB1. Interacts with host KPNB1/importin beta-1 without previous binding to KPNA1/importin alpha-1. Interacts with EIF2AK2. Interacts with host nucleosome assembly protein NAP1L1; this interaction may be required for the transport of Tat within the nucleus, since the two proteins interact at the nuclear rim. Interacts with host C1QBP/SF2P32; this interaction involves lysine-acetylated Tat. Interacts with the host chemokine receptors CCR2, CCR3 and CXCR4. Interacts with host DPP4/CD26; this interaction may trigger an anti-proliferative effect. Interacts with host LDLR. Interacts with the host extracellular matrix metalloproteinase MMP1. Interacts with host PRMT6; this interaction mediates Tat's methylation. Interacts with, and is ubiquitinated by MDM2/Hdm2. Interacts with host PSMC3 and HTATIP2. Interacts with STAB1; this interaction may overcome SATB1-mediated repression of IL2 and IL2RA (interleukin) in T cells by binding to the same domain than HDAC1. Interacts (when acetylated) with human CDK13, thereby increasing HIV-1 mRNA splicing and promoting the production of the doubly spliced HIV-1 protein Nef. Interacts with host TBP; this interaction modulates the activity of transcriptional pre-initiation complex. Interacts with host RELA. Interacts with host PLSCR1; this interaction negatively regulates Tat transactivation activity by altering its subcellular distribution. Post-translationally, asymmetrical arginine methylation by host PRMT6 seems to diminish the transactivation capacity of Tat and affects the interaction with host CCNT1. In terms of processing, acetylation by EP300, CREBBP, GCN5L2/GCN5 and PCAF regulates the transactivation activity of Tat. EP300-mediated acetylation of Lys-50 promotes dissociation of Tat from the TAR RNA through the competitive binding to PCAF's bromodomain. In addition, the non-acetylated Tat's N-terminus can also interact with PCAF. PCAF-mediated acetylation of Lys-28 enhances Tat's binding to CCNT1. Lys-50 is deacetylated by SIRT1. Polyubiquitination by host MDM2 does not target Tat to degradation, but activates its transactivation function and fosters interaction with CCNT1 and TAR RNA. Post-translationally, phosphorylated by EIF2AK2 on serine and threonine residues adjacent to the basic region important for TAR RNA binding and function. Phosphorylation of Tat by EIF2AK2 is dependent on the prior activation of EIF2AK2 by dsRNA.

The protein resides in the host nucleus. It is found in the host nucleolus. Its subcellular location is the host cytoplasm. The protein localises to the secreted. In terms of biological role, transcriptional activator that increases RNA Pol II processivity, thereby increasing the level of full-length viral transcripts. Recognizes a hairpin structure at the 5'-LTR of the nascent viral mRNAs referred to as the transactivation responsive RNA element (TAR) and recruits the cyclin T1-CDK9 complex (P-TEFb complex) that will in turn hyperphosphorylate the RNA polymerase II to allow efficient elongation. The CDK9 component of P-TEFb and other Tat-activated kinases hyperphosphorylate the C-terminus of RNA Pol II that becomes stabilized and much more processive. Other factors such as HTATSF1/Tat-SF1, SUPT5H/SPT5, and HTATIP2 are also important for Tat's function. Besides its effect on RNA Pol II processivity, Tat induces chromatin remodeling of proviral genes by recruiting the histone acetyltransferases (HATs) CREBBP, EP300 and PCAF to the chromatin. This also contributes to the increase in proviral transcription rate, especially when the provirus integrates in transcriptionally silent region of the host genome. To ensure maximal activation of the LTR, Tat mediates nuclear translocation of NF-kappa-B by interacting with host RELA. Through its interaction with host TBP, Tat may also modulate transcription initiation. Tat can reactivate a latently infected cell by penetrating in it and transactivating its LTR promoter. In the cytoplasm, Tat is thought to act as a translational activator of HIV-1 mRNAs. Its function is as follows. Extracellular circulating Tat can be endocytosed by surrounding uninfected cells via the binding to several surface receptors such as CD26, CXCR4, heparan sulfate proteoglycans (HSPG) or LDLR. Neurons are rarely infected, but they internalize Tat via their LDLR. Through its interaction with nuclear HATs, Tat is potentially able to control the acetylation-dependent cellular gene expression. Modulates the expression of many cellular genes involved in cell survival, proliferation or in coding for cytokines or cytokine receptors. Tat plays a role in T-cell and neurons apoptosis. Tat induced neurotoxicity and apoptosis probably contribute to neuroAIDS. Circulating Tat also acts as a chemokine-like and/or growth factor-like molecule that binds to specific receptors on the surface of the cells, affecting many cellular pathways. In the vascular system, Tat binds to ITGAV/ITGB3 and ITGA5/ITGB1 integrins dimers at the surface of endothelial cells and competes with bFGF for heparin-binding sites, leading to an excess of soluble bFGF. The protein is Protein Tat of Homo sapiens (Human).